The following is a 115-amino-acid chain: uncharacterized protein (115 aa).

This is an uncharacterized protein from Acidianus convivator (ATV).